Reading from the N-terminus, the 144-residue chain is RxLR effector protein PITG_03192 (144 aa).

The signal sequence occupies residues 1 to 24 (MRVGFVFALLVVSVIVCFNGLTSA). Residues 49–58 (RNLRASGEER) carry the RxLR-dEER motif. N-linked (GlcNAc...) asparagine glycosylation is present at Asn115. A helical transmembrane segment spans residues 122 to 142 (FFILATLVMFPIGVWAVVTNY).

It belongs to the RxLR effector family. Interacts with the C-terminal portions the ER-associated potato NAC transcription factors NTP1 and NTP2.

It localises to the secreted. The protein resides in the host endoplasmic reticulum membrane. Effector that is required for full virulence. Targets host NTP1 and NTP2 transcription factors and prevents their pathogen-associated molecular pattern (PAMP)-triggered re-localization from the endoplasmic reticulum into the nucleus, where they contribute to prevent disease progression by P.infestans. This Phytophthora infestans (strain T30-4) (Potato late blight agent) protein is RxLR effector protein PITG_03192.